The following is a 453-amino-acid chain: Glutamyl-tRNA(Gln) amidotransferase subunit A (453 aa).

Active-site charge relay system residues include Lys-53 and Ser-128. Ser-152 (acyl-ester intermediate) is an active-site residue.

The protein belongs to the amidase family. GatA subfamily. In terms of assembly, heterotrimer of A, B and C subunits.

It catalyses the reaction L-glutamyl-tRNA(Gln) + L-glutamine + ATP + H2O = L-glutaminyl-tRNA(Gln) + L-glutamate + ADP + phosphate + H(+). Its function is as follows. Allows the formation of correctly charged Gln-tRNA(Gln) through the transamidation of misacylated Glu-tRNA(Gln) in organisms which lack glutaminyl-tRNA synthetase. The reaction takes place in the presence of glutamine and ATP through an activated gamma-phospho-Glu-tRNA(Gln). The protein is Glutamyl-tRNA(Gln) amidotransferase subunit A of Helicobacter pylori (strain P12).